The primary structure comprises 43 residues: Potassium channel toxin gamma-KTx 4.5 (43 aa).

Cystine bridges form between Cys-5-Cys-23, Cys-11-Cys-34, Cys-20-Cys-39, and Cys-24-Cys-41.

This sequence belongs to the ergtoxin family. Gamma-KTx 4 subfamily. As to expression, expressed by the venom gland.

It is found in the secreted. Functionally, reversibly blocks Kv11/ERG potassium channels. This is Potassium channel toxin gamma-KTx 4.5 from Centruroides exilicauda (Bark scorpion).